We begin with the raw amino-acid sequence, 238 residues long: Sugar fermentation stimulation protein homolog (238 aa).

This sequence belongs to the SfsA family.

This chain is Sugar fermentation stimulation protein homolog, found in Brucella abortus (strain S19).